Reading from the N-terminus, the 620-residue chain is Mitochondrial Rho GTPase 2 (620 aa).

The Cytoplasmic segment spans residues 1–594 (MKRDVRILLL…ELHTTSFWLR (594 aa)). The Miro 1 domain occupies 2 to 168 (KRDVRILLLG…FYYAQKAVLH (167 aa)). GTP is bound by residues Gly-16, Lys-17, Thr-18, and Ser-19. Residue Thr-18 coordinates Mg(2+). Mg(2+) is bound by residues Pro-35 and Asp-57. Residue Ser-59 coordinates GTP. A Glycyl lysine isopeptide (Lys-Gly) (interchain with G-Cter in ubiquitin) cross-link involves residue Lys-96. GTP is bound by residues Asn-118, Lys-119, Asp-121, Ala-149, and Lys-150. Residue Lys-119 forms a Glycyl lysine isopeptide (Lys-Gly) (interchain with G-Cter in ubiquitin) linkage. Residue Lys-164 forms a Glycyl lysine isopeptide (Lys-Gly) (interchain with G-Cter in ubiquitin) linkage. EF-hand domains follow at residues 184–219 (ACAQ…CFGH) and 304–339 (HGYQ…FPGP). Ca(2+)-binding residues include Asp-197, Asp-199, Asp-201, Glu-208, Asp-317, Asp-319, Asp-321, and Glu-328. A disordered region spans residues 340–364 (PWGPQLPRHRPHRGRSAAPARVPLP). The 164-residue stretch at 415 to 578 (RNVLLCKVLG…FARLATMATF (164 aa)) folds into the Miro 2 domain. GTP contacts are provided by Gly-427, Gly-429, Lys-430, and Ser-431. Residues Ser-431 and Glu-473 each contribute to the Mg(2+) site. Residues Lys-527, Asp-529, and Cys-558 each coordinate GTP. Residues 595–617 (VALGAVGAAVAAILSFSLYRVLV) traverse the membrane as a helical; Anchor for type IV membrane protein segment. Residues 618-620 (KSR) are Mitochondrial intermembrane-facing.

Belongs to the mitochondrial Rho GTPase family. As to quaternary structure, homodimer. Interacts with the kinesin-binding proteins TRAK1/OIP106 and TRAK2/GRIF1, forming a link between mitochondria and the trafficking apparatus of the microtubules. Interacts with ARMCX3. Found in a complex with KIF5B, OGT, RHOT1 and TRAK1. In terms of processing, ubiquitinated by PRKN in a PINK1-dependent manner, leading to its degradation.

Its subcellular location is the mitochondrion outer membrane. The catalysed reaction is GTP + H2O = GDP + phosphate + H(+). It carries out the reaction ATP + H2O = ADP + phosphate + H(+). It catalyses the reaction UTP + H2O = UDP + phosphate + H(+). Its function is as follows. Atypical mitochondrial nucleoside-triphosphatase (NTPase) involved in mitochondrial trafficking. Probably involved in control of anterograde transport of mitochondria and their subcellular distribution. Can hydrolyze GTP, ATP and UTP. In Sus scrofa (Pig), this protein is Mitochondrial Rho GTPase 2 (RHOT2).